The sequence spans 635 residues: Sulfite reductase [ferredoxin], chloroplastic (635 aa).

The N-terminal 50 residues, 1–50, are a transit peptide targeting the chloroplast; that stretch reads MSGAIGGAEVHGFRGAAAQLPRSRVLGRPIRVAPPAAARPGGASAGSIRA. 2 disordered regions span residues 31–50 and 245–267; these read RVAPPAAARPGGASAGSIRA and PEVTKARNDNSHGTNFPDSPEPI. A compositionally biased stretch (basic and acidic residues) spans 245-254; it reads PEVTKARNDN. Residues cysteine 494, cysteine 500, cysteine 540, and cysteine 544 each coordinate [4Fe-4S] cluster. Siroheme is bound at residue cysteine 544.

Belongs to the nitrite and sulfite reductase 4Fe-4S domain family. In terms of assembly, monomer. Interacts with ferredoxin. Siroheme is required as a cofactor. Requires [4Fe-4S] cluster as cofactor. Post-translationally, phosphorylated; this phosphorylation reduces DNA-binding. As to expression, present in roots and leaves (at protein level). In leaves, sulfite reductase activity is detected in both bundle sheath and mesophyll cell types.

It is found in the plastid. It localises to the chloroplast stroma. The protein localises to the chloroplast nucleoid. The protein resides in the plastid stroma. The catalysed reaction is hydrogen sulfide + 6 oxidized [2Fe-2S]-[ferredoxin] + 3 H2O = sulfite + 6 reduced [2Fe-2S]-[ferredoxin] + 7 H(+). With respect to regulation, inhibited by the tryptophan-modifying reagent, N-bromosuccinimide (NBS), by the lysine-modifying reagent, N-acetylsuccinimide and by the arginine-modifying reagent, phenylglyoxal. Complex formation with ferredoxin prevents these inhibitions. In terms of biological role, essential protein with sulfite reductase activity required in assimilatory sulfate reduction pathway during both primary and secondary metabolism and thus involved in development and growth. DNA-binding protein that binds to both double-stranded and single-stranded DNA without significant sequence specificity to reversibly repress the transcriptional activity of chloroplast nucleoids by promoting DNA compaction and possibly regulate DNA replication. In Zea mays (Maize), this protein is Sulfite reductase [ferredoxin], chloroplastic (SIR).